A 154-amino-acid polypeptide reads, in one-letter code: Ribonuclease H (154 aa).

One can recognise an RNase H type-1 domain in the interval 1-142 (MQKQIEIFTD…CDELAKKGAE (142 aa)). Residues aspartate 10, glutamate 48, aspartate 70, and aspartate 134 each contribute to the Mg(2+) site.

This sequence belongs to the RNase H family. In terms of assembly, monomer. Mg(2+) serves as cofactor.

The protein resides in the cytoplasm. The catalysed reaction is Endonucleolytic cleavage to 5'-phosphomonoester.. Functionally, endonuclease that specifically degrades the RNA of RNA-DNA hybrids. The chain is Ribonuclease H from Haemophilus influenzae (strain 86-028NP).